The primary structure comprises 264 residues: COP9 signalosome complex subunit 7b (264 aa).

Ala-2 is modified (N-acetylalanine). The PCI domain occupies 2–159 (AGEQKPSSNL…QLLEVDFCIG (158 aa)). Residues 194 to 237 (RANQYKENHHRTQQQVEAEVSNIKKTLKATASSSAQEMEQQLAE) adopt a coiled-coil conformation. A compositionally biased stretch (polar residues) spans 223-232 (TASSSAQEME). Residues 223–264 (TASSSAQEMEQQLAERECPPHTEQRQPTKKMSKVKGLVSSRH) form a disordered region. The segment covering 235 to 248 (LAERECPPHTEQRQ) has biased composition (basic and acidic residues).

The protein belongs to the CSN7/EIF3M family. CSN7 subfamily. In terms of assembly, component of the CSN complex, composed of COPS1/GPS1, COPS2, COPS3, COPS4, COPS5, COPS6, COPS7 (COPS7A or COPS7B) and COPS8 and COPS9. In the complex, it probably interacts directly with COPS1, COPS2, COPS4, COPS5, COPS6 and COPS8. Interacts with EIF3S6.

The protein localises to the cytoplasm. It localises to the nucleus. Its function is as follows. Component of the COP9 signalosome complex (CSN), a complex involved in various cellular and developmental processes. The CSN complex is an essential regulator of the ubiquitin (Ubl) conjugation pathway by mediating the deneddylation of the cullin subunits of SCF-type E3 ligase complexes, leading to decrease the Ubl ligase activity of SCF-type complexes such as SCF, CSA or DDB2. The complex is also involved in phosphorylation of p53/TP53, JUN, I-kappa-B-alpha/NFKBIA, ITPK1 and IRF8/ICSBP, possibly via its association with CK2 and PKD kinases. CSN-dependent phosphorylation of TP53 and JUN promotes and protects degradation by the Ubl system, respectively. This is COP9 signalosome complex subunit 7b (Cops7b) from Mus musculus (Mouse).